Here is a 190-residue protein sequence, read N- to C-terminus: Nucleoside triphosphate pyrophosphatase (190 aa).

The Proton acceptor role is filled by Asp-69.

The protein belongs to the Maf family. A divalent metal cation serves as cofactor.

The protein localises to the cytoplasm. It carries out the reaction a ribonucleoside 5'-triphosphate + H2O = a ribonucleoside 5'-phosphate + diphosphate + H(+). The catalysed reaction is a 2'-deoxyribonucleoside 5'-triphosphate + H2O = a 2'-deoxyribonucleoside 5'-phosphate + diphosphate + H(+). Its function is as follows. Nucleoside triphosphate pyrophosphatase. May have a dual role in cell division arrest and in preventing the incorporation of modified nucleotides into cellular nucleic acids. In Helicobacter pylori (strain ATCC 700392 / 26695) (Campylobacter pylori), this protein is Nucleoside triphosphate pyrophosphatase.